Here is a 749-residue protein sequence, read N- to C-terminus: Catalase-peroxidase 2 (749 aa).

Residues 1 to 27 (MFKRTIPLFAAFTLAISPSIFPNYAHA) form the signal peptide. The tryptophyl-tyrosyl-methioninium (Trp-Tyr) (with M-255) cross-link spans 107–229 (WHAAGTYRIY…LAATVMGLIY (123 aa)). H108 serves as the catalytic Proton acceptor. A cross-link (tryptophyl-tyrosyl-methioninium (Tyr-Met) (with W-107)) is located at residues 229–255 (YVNPEGPNGVPDPLAAAEKIRETFGRM). A heme b-binding site is contributed by H270.

It belongs to the peroxidase family. Peroxidase/catalase subfamily. Homodimer or homotetramer. Requires heme b as cofactor. Formation of the three residue Trp-Tyr-Met cross-link is important for the catalase, but not the peroxidase activity of the enzyme.

The enzyme catalyses H2O2 + AH2 = A + 2 H2O. It carries out the reaction 2 H2O2 = O2 + 2 H2O. Functionally, bifunctional enzyme with both catalase and broad-spectrum peroxidase activity. This is Catalase-peroxidase 2 from Legionella pneumophila subsp. pneumophila (strain Philadelphia 1 / ATCC 33152 / DSM 7513).